Consider the following 214-residue polypeptide: LexA repressor (214 aa).

A DNA-binding region (H-T-H motif) is located at residues 28–48 (IRDIQRELSISSTSVVAYNLR). Residues S133 and K172 each act as for autocatalytic cleavage activity in the active site.

The protein belongs to the peptidase S24 family. Homodimer.

The enzyme catalyses Hydrolysis of Ala-|-Gly bond in repressor LexA.. Represses a number of genes involved in the response to DNA damage (SOS response), including recA and lexA. In the presence of single-stranded DNA, RecA interacts with LexA causing an autocatalytic cleavage which disrupts the DNA-binding part of LexA, leading to derepression of the SOS regulon and eventually DNA repair. The sequence is that of LexA repressor from Herpetosiphon aurantiacus (strain ATCC 23779 / DSM 785 / 114-95).